We begin with the raw amino-acid sequence, 692 residues long: MAREFSLENTRNIGIMAHIDAGKTTTTERILFYTGRIHKIGETHEGASQMDWMEQEQERGITITSAATTAQWKNNRINIIDTPGHVDFTVEVERSLRVLDGAVAVLDAQSGVEPQTETVWRQATTYGVPRVVFVNKMDKTGADFLYSVSTLHDRLQANAHPIQLPIGAEDNFEGIIDLVDMVAYFYEDDLGTRTEAKEIPDEYKEQAQEYHEKLVEAAAELDEELMMKYLEGEELTKDELKAAIRKGTCNVEFYPVLCGSAFKNKGVQLMLDAVLDYLPSPLDVPAIKGHVPDTEEEAVRKPGDDQPFAALAFKVMTDPYVGKLTFFRVYSGTLDSGSYVKNSTKDKRERVGRILQMHANHREEISTVYSGDIAAAVGLKDTSTGDTLCDEKNLVILESMEFPEPVIHLSVEPKSKADQDKMGLALAKLAEEDPTFKTHTDEETGQTIIAGMGELHLDIIVDRLRREFKVEANVGAPQVSYRETIRQAAQVEGKFVRQSGGRGQYGHVWIEFSPNEEGAGFEFVNGIVGGVVPREYIPSVQAGLEEALENGLLAGYPVIDIKAKLFDGSYHDVDSSEMAFKIAASMALKNAKSKCNPVLLEPMMKVEVVVPEEYMGDVMGDITSRRGRVEGMEARGNAQVVKAFVPLAEMFGYATSLRSRTQGRGTYTMFFDHYEEVPKSISEEIIKKNSGE.

Residues Glu-8–Leu-282 form the tr-type G domain. GTP-binding positions include Ala-17–Thr-24, Asp-81–His-85, and Asn-135–Asp-138.

It belongs to the TRAFAC class translation factor GTPase superfamily. Classic translation factor GTPase family. EF-G/EF-2 subfamily.

It localises to the cytoplasm. Functionally, catalyzes the GTP-dependent ribosomal translocation step during translation elongation. During this step, the ribosome changes from the pre-translocational (PRE) to the post-translocational (POST) state as the newly formed A-site-bound peptidyl-tRNA and P-site-bound deacylated tRNA move to the P and E sites, respectively. Catalyzes the coordinated movement of the two tRNA molecules, the mRNA and conformational changes in the ribosome. In Halalkalibacterium halodurans (strain ATCC BAA-125 / DSM 18197 / FERM 7344 / JCM 9153 / C-125) (Bacillus halodurans), this protein is Elongation factor G (fusA).